The primary structure comprises 390 residues: Ribonuclease D (390 aa).

The region spanning 7-173 is the 3'-5' exonuclease domain; it reads ITDSATLAAL…TLFPMLLKEL (167 aa). Residues 212 to 293 enclose the HRDC domain; that stretch reads KADILGRLKA…ENAEALRPEE (82 aa).

Belongs to the RNase D family. Requires a divalent metal cation as cofactor.

The protein localises to the cytoplasm. The enzyme catalyses Exonucleolytic cleavage that removes extra residues from the 3'-terminus of tRNA to produce 5'-mononucleotides.. Its function is as follows. Exonuclease involved in the 3' processing of various precursor tRNAs. Initiates hydrolysis at the 3'-terminus of an RNA molecule and releases 5'-mononucleotides. This is Ribonuclease D from Zymomonas mobilis subsp. mobilis (strain ATCC 31821 / ZM4 / CP4).